Reading from the N-terminus, the 129-residue chain is Small ribosomal subunit protein uS11 (129 aa).

Belongs to the universal ribosomal protein uS11 family. Part of the 30S ribosomal subunit. Interacts with proteins S7 and S18. Binds to IF-3.

Located on the platform of the 30S subunit, it bridges several disparate RNA helices of the 16S rRNA. Forms part of the Shine-Dalgarno cleft in the 70S ribosome. This is Small ribosomal subunit protein uS11 from Rhodopseudomonas palustris (strain BisB18).